The following is an 834-amino-acid chain: Taste receptor type 1 member 2 (834 aa).

The first 19 residues, 1-19 (MGPRARTVCFLFFLLWVLA), serve as a signal peptide directing secretion. Residues 20-561 (ELAENSDFHL…SFLEWHEAAT (542 aa)) are Extracellular-facing. Asparagine 84, asparagine 292, asparagine 312, asparagine 363, asparagine 423, asparagine 482, and asparagine 522 each carry an N-linked (GlcNAc...) asparagine glycan. The helical transmembrane segment at 562 to 582 (IAVALLAALGFLXXXXXXXXX) threads the bilayer. Over 583 to 597 (XXXXXXPMVRSAGGP) the chain is Cytoplasmic. Residues 598–618 (MCFLMLTLLLVAYMVVPVYVG) form a helical membrane-spanning segment. Over 619 to 630 (PPKVTTCLCRQA) the chain is Extracellular. Residues 631–651 (LFPVCFTICISCITMRSFQIV) form a helical membrane-spanning segment. Topologically, residues 652 to 676 (CVFKMASRFPRAYSYWVRYQGSYVS) are cytoplasmic. The helical transmembrane segment at 677–697 (VAFITALKVVTVVISLLATGL) threads the bilayer. At 698–722 (NPTTRADTDDPKIMIISCNPNYRNS) the chain is on the extracellular side. Residues 723-743 (LLFNTSLDLLLSVVGFSFAYM) form a helical membrane-spanning segment. The Cytoplasmic segment spans residues 744 to 755 (GKELPTNYNEAK). A helical transmembrane segment spans residues 756–776 (FITFSMTFYFTSSVSLCTFMS). Residues 777 to 779 (VYD) are Extracellular-facing. The chain crosses the membrane as a helical span at residues 780–800 (GVLVTIVDLLVTVFNLLAISL). At 801 to 834 (GYFGPKCYMILFYPERNTPAYFNSMIQGYTMRRD) the chain is on the cytoplasmic side.

Belongs to the G-protein coupled receptor 3 family. TAS1R subfamily. Forms heterodimers with TAS1R3.

It is found in the cell membrane. Functionally, putative taste receptor. TAS1R2/TAS1R3 recognizes diverse natural and synthetic sweeteners. The sequence is that of Taste receptor type 1 member 2 (TAS1R2) from Cebuella pygmaea (Pygmy marmoset).